A 576-amino-acid chain; its full sequence is Capsid protein (576 aa).

The segment at 489 to 576 is disordered; it reads GYREPKPKPG…GLLALLKEKK (88 aa). The span at 496–509 shows a compositional bias: pro residues; the sequence is KPGPPETLIPPGAP. A compositionally biased stretch (acidic residues) spans 520-537; sequence TESDDFDTGDSEEEEEDH. Positions 538 to 551 are enriched in basic and acidic residues; sequence QDPRWVRESLDKLT. A compositionally biased stretch (low complexity) spans 562-576; sequence QQLGKGLLALLKEKK.

This sequence belongs to the anelloviridae capsid protein family.

Its subcellular location is the virion. Its function is as follows. Self-assembles to form an icosahedral capsid with a T=1 symmetry, about 30 nm in diameter, and consisting of 60 capsid proteins. The capsid encapsulates the genomic DNA. Capsid protein is involved in attachment and entry into the host cell. The chain is Capsid protein from Torque teno canis virus (isolate Cf-TTV10).